A 462-amino-acid chain; its full sequence is Integrator complex subunit 12 (462 aa).

The interval 39–132 (LARGIDSSYR…PETRSSPITV (94 aa)) is disordered. A compositionally biased stretch (polar residues) spans 59–86 (ISSTKTVSVKQEPKTSSSLPSGNNNGKV). Lys-68 is covalently cross-linked (Glycyl lysine isopeptide (Lys-Gly) (interchain with G-Cter in SUMO2)). A compositionally biased stretch (basic and acidic residues) spans 88–125 (TTEKVKKEGEKRPADKMKSDITEGADVPKKPRLEKPET). Ser-128 is subject to Phosphoserine. The PHD-type zinc-finger motif lies at 159–215 (GLACVVCRQMTVASGNQLVECQECHNLYHQDCHKPQVTDKEVTDPRLVWYCARCTRQ). Lys-254 participates in a covalent cross-link: Glycyl lysine isopeptide (Lys-Gly) (interchain with G-Cter in SUMO2). The span at 305–328 (PSTAKLSSAAQNNSGKPATSSANQ) shows a compositional bias: polar residues. The tract at residues 305–462 (PSTAKLSSAA…KKAAQKKLKK (158 aa)) is disordered. 2 stretches are compositionally biased toward low complexity: residues 347-358 (KIGSSNSTSPTV) and 382-431 (VSKV…PSAS). Positions 434-443 (GPTSQESQLN) are enriched in polar residues. Basic residues predominate over residues 449–462 (QMVKKKAAQKKLKK).

Belongs to the Integrator subunit 12 family. As to quaternary structure, component of the Integrator complex, composed of core subunits INTS1, INTS2, INTS3, INTS4, INTS5, INTS6, INTS7, INTS8, INTS9/RC74, INTS10, INTS11/CPSF3L, INTS12, INTS13, INTS14 and INTS15. The core complex associates with protein phosphatase 2A subunits PPP2CA and PPP2R1A, to form the Integrator-PP2A (INTAC) complex. Dephosphorylated at Ser-128 by the PNUTS-PP1 complex, promoting RNA polymerase II transcription pause-release.

The protein localises to the nucleus. In terms of biological role, component of the integrator complex, a multiprotein complex that terminates RNA polymerase II (Pol II) transcription in the promoter-proximal region of genes. The integrator complex provides a quality checkpoint during transcription elongation by driving premature transcription termination of transcripts that are unfavorably configured for transcriptional elongation: the complex terminates transcription by (1) catalyzing dephosphorylation of the C-terminal domain (CTD) of Pol II subunit POLR2A/RPB1 and SUPT5H/SPT5, (2) degrading the exiting nascent RNA transcript via endonuclease activity and (3) promoting the release of Pol II from bound DNA. The integrator complex is also involved in terminating the synthesis of non-coding Pol II transcripts, such as enhancer RNAs (eRNAs), small nuclear RNAs (snRNAs), telomerase RNAs and long non-coding RNAs (lncRNAs). Mediates recruitment of cytoplasmic dynein to the nuclear envelope, probably as component of the integrator complex. This is Integrator complex subunit 12 (INTS12) from Bos taurus (Bovine).